A 1289-amino-acid chain; its full sequence is DNA-directed RNA polymerase subunit beta (1289 aa).

This sequence belongs to the RNA polymerase beta chain family. In terms of assembly, the RNAP catalytic core consists of 2 alpha, 1 beta, 1 beta' and 1 omega subunit. When a sigma factor is associated with the core the holoenzyme is formed, which can initiate transcription.

It catalyses the reaction RNA(n) + a ribonucleoside 5'-triphosphate = RNA(n+1) + diphosphate. In terms of biological role, DNA-dependent RNA polymerase catalyzes the transcription of DNA into RNA using the four ribonucleoside triphosphates as substrates. This chain is DNA-directed RNA polymerase subunit beta, found in Methylacidiphilum infernorum (isolate V4) (Methylokorus infernorum (strain V4)).